Reading from the N-terminus, the 937-residue chain is Chromatin assembly factor 1 subunit A (937 aa).

Positions 21 to 69 are disordered; the sequence is RLPFKRLNPVPKEKHDAEAEGKKGKCSKSGLGQSKDSSTDTLHASTDNM. Positions 31-43 are enriched in basic and acidic residues; sequence PKEKHDAEAEGKK. Over residues 59–69 the composition is skewed to polar residues; it reads TDTLHASTDNM. The PxVxL motif signature appears at 213 to 226; that stretch reads FEGKMPVVLLEDIM. Disordered regions lie at residues 250-386, 574-614, 753-778, 831-851, and 910-937; these read SHEG…EKRK, VDSD…IPHG, GDTS…VPSK, SGKE…TPVS, and TVTE…SNTV. The span at 255 to 269 shows a compositional bias: low complexity; the sequence is SVLTNSSLSSLSVSS. Basic and acidic residues predominate over residues 301–386; sequence SSAEKEKLRL…KLRVKEEKRK (86 aa). Acidic residues-rich tracts occupy residues 574-586 and 594-608; these read VDSD…EEPG and GDDE…DDDG. A compositionally biased stretch (polar residues) spans 756 to 766; that stretch reads SPVSPNTSRPQ.

The protein belongs to the CHAF1A family. In terms of assembly, subunit of the CAF-1 complex that contains RBBP4, CHAF1B and CHAF1A. Interacts with CHAF1B, PCNA and RBBP4.

The protein resides in the nucleus. In terms of biological role, acts as a component of the histone chaperone complex chromatin assembly factor 1 (CAF-1), which assembles histone octamers onto DNA during replication and repair. CAF-1 performs the first step of the nucleosome assembly process, bringing newly synthesized histones H3 and H4 to replicating DNA; histones H2A/H2B can bind to this chromatin precursor subsequent to DNA replication to complete the histone octamer. The polypeptide is Chromatin assembly factor 1 subunit A (CHAF1A) (Gallus gallus (Chicken)).